Here is a 345-residue protein sequence, read N- to C-terminus: N-acetyl-gamma-glutamyl-phosphate reductase (345 aa).

Cys-153 is a catalytic residue.

The protein belongs to the NAGSA dehydrogenase family. Type 1 subfamily.

It localises to the cytoplasm. It catalyses the reaction N-acetyl-L-glutamate 5-semialdehyde + phosphate + NADP(+) = N-acetyl-L-glutamyl 5-phosphate + NADPH + H(+). It functions in the pathway amino-acid biosynthesis; L-arginine biosynthesis; N(2)-acetyl-L-ornithine from L-glutamate: step 3/4. Its function is as follows. Catalyzes the NADPH-dependent reduction of N-acetyl-5-glutamyl phosphate to yield N-acetyl-L-glutamate 5-semialdehyde. This is N-acetyl-gamma-glutamyl-phosphate reductase from Methylacidiphilum infernorum (isolate V4) (Methylokorus infernorum (strain V4)).